The following is a 203-amino-acid chain: Small ribosomal subunit protein uS4 (203 aa).

Residues 93-156 (RRLDNVVYRL…MKVPAILEAV (64 aa)) enclose the S4 RNA-binding domain.

Belongs to the universal ribosomal protein uS4 family. Part of the 30S ribosomal subunit. Contacts protein S5. The interaction surface between S4 and S5 is involved in control of translational fidelity.

In terms of biological role, one of the primary rRNA binding proteins, it binds directly to 16S rRNA where it nucleates assembly of the body of the 30S subunit. Functionally, with S5 and S12 plays an important role in translational accuracy. This is Small ribosomal subunit protein uS4 from Streptococcus equi subsp. equi (strain 4047).